A 284-amino-acid chain; its full sequence is Tropomyosin (284 aa).

Residues 1 to 284 (MDSIKKKMMA…DTTFAELTSF (284 aa)) adopt a coiled-coil conformation. Residues 97-140 (EDFEQSSGRLTETSTKLDDASKAAEESERNRKTLETRSISDDER) form a disordered region. The span at 101 to 110 (QSSGRLTETS) shows a compositional bias: polar residues. Over residues 111 to 140 (TKLDDASKAAEESERNRKTLETRSISDDER) the composition is skewed to basic and acidic residues.

Belongs to the tropomyosin family. In terms of assembly, homodimer.

Tropomyosin, in association with the troponin complex, plays a central role in the calcium dependent regulation of muscle contraction. This is Tropomyosin from Echinococcus multilocularis (Fox tapeworm).